A 445-amino-acid polypeptide reads, in one-letter code: GTPase Der (445 aa).

2 EngA-type G domains span residues 3 to 167 (PVIA…YADQ) and 180 to 353 (IKIA…AAAM). GTP is bound by residues 9–16 (GRPNVGKS), 56–60 (DTGGF), 119–122 (NKAE), 186–193 (GRPNVGKS), 233–237 (DTAGL), and 298–301 (NKWD). Residues 354 to 438 (AKLPTPKLTR…PLRIEFRSST (85 aa)) form the KH-like domain.

Belongs to the TRAFAC class TrmE-Era-EngA-EngB-Septin-like GTPase superfamily. EngA (Der) GTPase family. As to quaternary structure, associates with the 50S ribosomal subunit.

Functionally, GTPase that plays an essential role in the late steps of ribosome biogenesis. This Burkholderia multivorans (strain ATCC 17616 / 249) protein is GTPase Der.